The following is a 772-amino-acid chain: Probable beta-glucosidase M (772 aa).

The N-terminal stretch at Met1–Ala20 is a signal peptide. Asn259 is a glycosylation site (N-linked (GlcNAc...) asparagine). The active site involves Asp287. N-linked (GlcNAc...) asparagine glycans are attached at residues Asn315, Asn322, Asn438, Asn523, Asn547, Asn574, and Asn586.

This sequence belongs to the glycosyl hydrolase 3 family.

It localises to the secreted. The enzyme catalyses Hydrolysis of terminal, non-reducing beta-D-glucosyl residues with release of beta-D-glucose.. It participates in glycan metabolism; cellulose degradation. Its function is as follows. Beta-glucosidases are one of a number of cellulolytic enzymes involved in the degradation of cellulosic biomass. Catalyzes the last step releasing glucose from the inhibitory cellobiose. In Emericella nidulans (strain FGSC A4 / ATCC 38163 / CBS 112.46 / NRRL 194 / M139) (Aspergillus nidulans), this protein is Probable beta-glucosidase M (bglM).